The sequence spans 151 residues: SsrA-binding protein (151 aa).

A disordered region spans residues 132–151 (KRQTIKKRDQDREIHRKYGI).

This sequence belongs to the SmpB family.

Its subcellular location is the cytoplasm. Its function is as follows. Required for rescue of stalled ribosomes mediated by trans-translation. Binds to transfer-messenger RNA (tmRNA), required for stable association of tmRNA with ribosomes. tmRNA and SmpB together mimic tRNA shape, replacing the anticodon stem-loop with SmpB. tmRNA is encoded by the ssrA gene; the 2 termini fold to resemble tRNA(Ala) and it encodes a 'tag peptide', a short internal open reading frame. During trans-translation Ala-aminoacylated tmRNA acts like a tRNA, entering the A-site of stalled ribosomes, displacing the stalled mRNA. The ribosome then switches to translate the ORF on the tmRNA; the nascent peptide is terminated with the 'tag peptide' encoded by the tmRNA and targeted for degradation. The ribosome is freed to recommence translation, which seems to be the essential function of trans-translation. This chain is SsrA-binding protein, found in Lactobacillus gasseri (strain ATCC 33323 / DSM 20243 / BCRC 14619 / CIP 102991 / JCM 1131 / KCTC 3163 / NCIMB 11718 / NCTC 13722 / AM63).